Consider the following 258-residue polypeptide: Cruciform cutting endonuclease 1, mitochondrial (258 aa).

The SAP domain maps to 1–35; it reads MATVKLSFLQHICKLTGLSRSGRKDELLRRIVDSP. Positions 46 and 230 each coordinate Mg(2+).

Homodimer.

Its subcellular location is the mitochondrion. The catalysed reaction is Endonucleolytic cleavage at a junction such as a reciprocal single-stranded crossover between two homologous DNA duplexes (Holliday junction).. Functionally, capable of resolving Holliday junctions. Specific for 4-way junctions. Seems to be important for the maintenance of mitochondrial DNA. Cleaves fixed junctions at the point of strand exchange. Cleaves after 5'-CT-3' and 5'-TT-3' sequences. The polypeptide is Cruciform cutting endonuclease 1, mitochondrial (cce1) (Schizosaccharomyces pombe (strain 972 / ATCC 24843) (Fission yeast)).